Consider the following 84-residue polypeptide: Delta-conotoxin-like MVIA (84 aa).

The N-terminal stretch at 1–22 is a signal peptide; it reads MKLTCVMIVAVLFLTTWTFVTA. Positions 23 to 49 are excised as a propeptide; that stretch reads DDSRYGLKNLFPKARHEMKNPEASKLN. Disulfide bonds link Cys-54-Cys-69, Cys-61-Cys-73, and Cys-68-Cys-77. Position 65 is a 4-hydroxyproline (Pro-65). The residue at position 83 (Ser-83) is a Serine amide.

The protein belongs to the conotoxin O1 superfamily. As to expression, expressed by the venom duct.

The protein resides in the secreted. Delta-conotoxins bind to site 6 of voltage-gated sodium channels (Nav) and inhibit the inactivation process. The polypeptide is Delta-conotoxin-like MVIA (Conus magus (Magical cone)).